The chain runs to 412 residues: Putative membrane protein 337L (412 aa).

Asn171, Asn186, Asn247, and Asn271 each carry an N-linked (GlcNAc...) asparagine; by host glycan. The helical transmembrane segment at 387–407 threads the bilayer; sequence VLITGIAVTGVAVLLFLLLMF.

It belongs to the IIV-6 337L family.

It localises to the virion membrane. In Acheta domesticus (House cricket), this protein is Putative membrane protein 337L.